Reading from the N-terminus, the 503-residue chain is Proton-coupled zinc antiporter SLC30A1 (503 aa).

The Cytoplasmic portion of the chain corresponds to 1 to 10 (MGCWGRNRGR). Residues 11–31 (LLCMLLLTFMFMVLEVVVSRV) traverse the membrane as a helical segment. Residues 32–35 (TASL) lie on the Extracellular side of the membrane. Residues 36-56 (AMLSDSFHMLSDVLALVVALV) form a helical membrane-spanning segment. Positions 43 and 47 each coordinate Zn(2+). The Cytoplasmic segment spans residues 57 to 78 (AERFARRTHATQKNTFGWIRAE). The helical transmembrane segment at 79–99 (VMGALVNAIFLTGLCFAILLE) threads the bilayer. At 100-113 (AVERFIEPHEMQQP) the chain is on the extracellular side. Residues 114–134 (LVVLSVGVAGLLVNVLGLCLF) form a helical membrane-spanning segment. Residues 135–243 (HHHSGEGQGA…RAGQLNMRGV (109 aa)) lie on the Cytoplasmic side of the membrane. The tract at residues 140 to 213 (EGQGAGHGHS…PEKLRSDDPV (74 aa)) is disordered. The interval 145–156 (GHGHSHGHGHGH) is 6 X 2 AA approximate repeats of H-G. Basic residues predominate over residues 147-165 (GHSHGHGHGHLAKGARKAG). The segment covering 184–196 (TNTLVANTSNSNG) has biased composition (polar residues). Basic and acidic residues predominate over residues 200 to 211 (DQAEPEKLRSDD). A helical transmembrane segment spans residues 244-264 (FLHVLGDALGSVIVVVNALVF). Zn(2+) is bound by residues His246 and Asp250. Residues 265 to 303 (YFNWKGCTEDDFCTNPCFPDPCKSSVEIINSTQAPMRDA) lie on the Extracellular side of the membrane. The N-linked (GlcNAc...) asparagine glycan is linked to Asn294. Residues 304-324 (GPCWVLYLDPTLCIIMVCILL) traverse the membrane as a helical segment. Topologically, residues 325–503 (YTTYPLLKES…VPNKQPESSL (179 aa)) are cytoplasmic. At Ser502 the chain carries Phosphoserine.

Belongs to the cation diffusion facilitator (CDF) transporter (TC 2.A.4) family. SLC30A subfamily. As to quaternary structure, homodimer. Interacts with TMEM163. Interacts and forms a complex with TMC6 and TMC8; the interaction regulates zinc transport into the ER. Widely expressed.

It is found in the cell membrane. Its subcellular location is the basolateral cell membrane. It localises to the cytoplasmic vesicle membrane. The protein resides in the cytoplasm. The protein localises to the endoplasmic reticulum membrane. It is found in the golgi apparatus membrane. Its subcellular location is the nucleus membrane. It catalyses the reaction Zn(2+)(in) + 2 H(+)(out) = Zn(2+)(out) + 2 H(+)(in). In terms of biological role, zinc ion:proton antiporter that could function at the plasma membrane mediating zinc efflux from cells against its electrochemical gradient protecting them from intracellular zinc accumulation and toxicity. Alternatively, could prevent the transport to the plasma membrane of CACNB2, the L-type calcium channels regulatory subunit, through a yet to be defined mechanism. By modulating the expression of these channels at the plasma membrane, could prevent calcium and zinc influx into cells. By the same mechanism, could also prevent L-type calcium channels-mediated heavy metal influx into cells. In some cells, could also function as a zinc ion:proton antiporter mediating zinc entry into the lumen of cytoplasmic vesicles. In macrophages, can increase zinc ions concentration into the lumen of cytoplasmic vesicles containing engulfed bacteria and could help inactivate them. Forms a complex with TMC6/EVER1 and TMC8/EVER2 at the ER membrane of keratynocytes which facilitates zinc uptake into the ER. Down-regulates the activity of transcription factors induced by zinc and cytokines. In Mus musculus (Mouse), this protein is Proton-coupled zinc antiporter SLC30A1.